Here is a 635-residue protein sequence, read N- to C-terminus: Peptidyl-prolyl cis-trans isomerase PASTICCINO1 (635 aa).

The span at 1–10 shows a compositional bias: polar residues; that stretch reads MAVGDQTEQN. Residues 1–28 are disordered; it reads MAVGDQTEQNYLPKKKKSETEDDKRRKK. PPIase FKBP-type domains lie at 51-147, 175-260, and 291-383; these read GDQV…LDFS, PYEV…VHFI, and DSRL…LGFE. TPR repeat units lie at residues 400–433, 449–482, and 483–516; these read ADKI…FNHV, NMLH…KPGH, and VKGL…DKSS. The tract at residues 530 to 546 is calmodulin-binding; it reads KEQEAESKARKQFKGLF. Residues 569 to 586 show a composition bias toward acidic residues; that stretch reads EVDETKDNDDDETLEEEG. The segment at 569-593 is disordered; the sequence is EVDETKDNDDDETLEEEGATTVSTE. The chain crosses the membrane as a helical; Anchor for type IV membrane protein span at residues 609 to 629; it reads VMLQIGIQLGVVLIGILIFQF.

It belongs to the FKBP-type PPIase family. Interacts with calmodulin (CaM). Interacts with RPM1 and NAC089. Interacts with the elongase complex core members KCR1, PAS2 and CER10. Expressed ubiquitously.

The protein localises to the endoplasmic reticulum membrane. Its subcellular location is the cytoplasm. The protein resides in the nucleus. The catalysed reaction is [protein]-peptidylproline (omega=180) = [protein]-peptidylproline (omega=0). PPIases accelerate the folding of proteins. It catalyzes the cis-trans isomerization of proline imidic peptide bonds in oligopeptides. Essential protein regulating cell division, adhesion and elongation throughout the plant development and embryogenesis. Required for the spatial organization of apical meristems. Involved in the hormonal control of cell division and differentiation mediated by cytokinins and auxin. Regulates the function of NAC089 transcription factor by controlling its targeting to the nucleus upon plant cell division. Interacts with enzymes of the fatty acid elongase complex and favors the generation of very-long-chain fatty acids (VLCFAs) required for polar auxin transport and tissue patterning during plant development. This Arabidopsis thaliana (Mouse-ear cress) protein is Peptidyl-prolyl cis-trans isomerase PASTICCINO1 (PAS1).